The chain runs to 221 residues: UPF0758 protein HI_0952 (221 aa).

An MPN domain is found at 99–221 (IINDPETVKL…CYSFAENCLL (123 aa)). Zn(2+)-binding residues include His170, His172, and Asp183. The short motif at 170 to 183 (HNHPSGITEPSYSD) is the JAMM motif element.

Belongs to the UPF0758 family.

The protein is UPF0758 protein HI_0952 of Haemophilus influenzae (strain ATCC 51907 / DSM 11121 / KW20 / Rd).